Here is a 335-residue protein sequence, read N- to C-terminus: Thioredoxin reductase (335 aa).

FAD-binding positions include 22 to 25 (SGPA), 44 to 51 (EGTSFGGA), Asn-60, and Val-93. Cys-145 and Cys-148 are oxidised to a cystine. The NADP(+) site is built by Ser-166, His-185, Arg-191, Ile-248, and Tyr-268. FAD is bound by residues Asp-288 and 295 to 298 (RQAV). Position 295 (Arg-295) interacts with NADP(+).

It belongs to the class-II pyridine nucleotide-disulfide oxidoreductase family. In terms of assembly, homodimer. Requires FAD as cofactor.

It localises to the cytoplasm. The enzyme catalyses [thioredoxin]-dithiol + NADP(+) = [thioredoxin]-disulfide + NADPH + H(+). The protein is Thioredoxin reductase of Mycobacterium tuberculosis (strain CDC 1551 / Oshkosh).